The following is a 525-amino-acid chain: Lysine--tRNA ligase (525 aa).

2 residues coordinate Mg(2+): Glu-430 and Glu-437.

The protein belongs to the class-II aminoacyl-tRNA synthetase family. In terms of assembly, homodimer. It depends on Mg(2+) as a cofactor.

It localises to the cytoplasm. It carries out the reaction tRNA(Lys) + L-lysine + ATP = L-lysyl-tRNA(Lys) + AMP + diphosphate. The chain is Lysine--tRNA ligase from Chlamydia caviae (strain ATCC VR-813 / DSM 19441 / 03DC25 / GPIC) (Chlamydophila caviae).